Here is an 817-residue protein sequence, read N- to C-terminus: Dolichyl-phosphate-mannose--protein mannosyltransferase 1 (817 aa).

The residue at position 2 (serine 2) is an N-acetylserine. The Cytoplasmic portion of the chain corresponds to 2–50; that stretch reads SEEKTYKRVEQDDPVPELDIKQGPVRPFIVTDPSAELASLRTMVTLKEK. The chain crosses the membrane as a helical span at residues 51–70; sequence LLVACLAVFTAVIRLHGLAW. The Lumenal segment spans residues 71 to 135; sequence PDSVVFDEVH…DSFPSTTPYV (65 aa). Residues 136-154 form a helical membrane-spanning segment; that stretch reads LMRFFSASLGALTVILMYM. Over 155–179 the chain is Cytoplasmic; the sequence is TLRYSGVRMWVALMSAICFAVENSY. A helical transmembrane segment spans residues 180–200; that stretch reads VTISRYILLDAPLMFFIAAAV. Residues 201–234 lie on the Lumenal side of the membrane; sequence YSFKKYEMYPANSLNAYKSLLATGIALGMASSSK. A helical membrane pass occupies residues 235 to 259; it reads WVGLFTVTWVGLLCIWRLWFMIGDL. Over 260–273 the chain is Cytoplasmic; it reads TKSSKSIFKVAFAK. The helical transmembrane segment at 274–291 threads the bilayer; the sequence is LAFLLGVPFALYLVFFYI. The Lumenal portion of the chain corresponds to 292-584; sequence HFQSLTLDGD…GENNRNVYLL (293 aa). MIR domains follow at residues 324 to 378, 388 to 448, and 459 to 514; these read VADV…LELY, FQNL…VEID, and ERVI…VENN. Asparagine 390 and asparagine 513 each carry an N-linked (GlcNAc...) asparagine glycan. A helical transmembrane segment spans residues 585-605; sequence GNAIVWWAVTAFIGIFGLIVI. The Cytoplasmic portion of the chain corresponds to 606–685; it reads TELFSWQLGK…SYVFRSKRQM (80 aa). Residues 686–710 traverse the membrane as a helical segment; sequence GYAVVITFLAASVYFFKSFSPIIYG. Over 711–817 the chain is Lumenal; the sequence is TPWTQELCQK…LKVEKRAVLE (107 aa). Asparagine 743 carries an N-linked (GlcNAc...) asparagine glycan.

Belongs to the glycosyltransferase 39 family. PMT1 and PMT2 form a functional heterodimer. The complex interacts with endoplasmic reticulum proteins EMP24, ERV25, ERP1, ERP2, CDC48, HRD1, USA1, YOS9, ERO1, PDI1, UBR1, Cue4, DFM1 and TED1. Forms also a minor complex with PMT3.

The protein localises to the endoplasmic reticulum membrane. The catalysed reaction is a di-trans,poly-cis-dolichyl beta-D-mannosyl phosphate + L-seryl-[protein] = 3-O-(alpha-D-mannosyl)-L-seryl-[protein] + a di-trans,poly-cis-dolichyl phosphate + H(+). It catalyses the reaction a di-trans,poly-cis-dolichyl beta-D-mannosyl phosphate + L-threonyl-[protein] = 3-O-(alpha-D-mannosyl)-L-threonyl-[protein] + a di-trans,poly-cis-dolichyl phosphate + H(+). The protein operates within protein modification; protein glycosylation. Functionally, protein O-mannosyltransferase involved in O-glycosylation which is essential for cell wall rigidity. Forms a heterodimeric complex with PMT2 and more rarely with PMT3 to transfer mannose from Dol-P-mannose to Ser or Thr residues on proteins. The PMT1-PMT2 complex participates in oxidative protein folding, ER-associated protein degradation (ERAD), as well as ER export. Required for incorporation of proteins in the cell wall. This is Dolichyl-phosphate-mannose--protein mannosyltransferase 1 from Saccharomyces cerevisiae (strain ATCC 204508 / S288c) (Baker's yeast).